A 296-amino-acid polypeptide reads, in one-letter code: Remorin 4.1 (296 aa).

Disordered regions lie at residues 1-78, 121-142, and 242-266; these read MLTL…SGEN, TRIG…DSNP, and EKTQ…EGKR. The segment covering 21–39 has biased composition (basic and acidic residues); the sequence is ASDRRDETPSSEIVVRDIH. Composition is skewed to polar residues over residues 41–53 and 62–78; these read MTTT…PQQR and PSRS…SGEN. Composition is skewed to basic and acidic residues over residues 121–135 and 253–266; these read TRIG…HGQV and RKAE…EGKR. Residues 226–261 are a coiled coil; it reads MKKIERKLEDRRAKAMEKTQNKVAKAQRKAEERRAT.

The protein belongs to the remorin family. Forms homodimer and heterodimer with REM4.2. Interacts with KIN11. Post-translationally, phosphorylated by KIN11. In terms of processing, probably ubiquitinated and degraded by the 26S proteasome pathway. Predominantly detected in bud, stem, root, flower, silique, and leaves, and enhanced dramatically in senescence leaf.

The protein resides in the cell membrane. Collaborates with REM4.2 to positively regulate the BCTV and BSCTV susceptibility. The protein is Remorin 4.1 of Arabidopsis thaliana (Mouse-ear cress).